The primary structure comprises 246 residues: Homeobox protein SIX6 (246 aa).

A DNA-binding region (homeobox) is located at residues 126-186 (WDGEQKTHCF…KNRRQRDRAA (61 aa)). Positions 190–246 (NRLQQQVLSQGPGRVLRSEGEGTPEVLGVASSPAASLSSKAATSAISITSSDSECDI) are disordered. Thr-212 is modified (phosphothreonine). Low complexity predominate over residues 219-246 (ASSPAASLSSKAATSAISITSSDSECDI). Residues Ser-221, Ser-225, Ser-227, and Ser-228 each carry the phosphoserine modification.

Belongs to the SIX/Sine oculis homeobox family. As to quaternary structure, interacts with TLE4 and TLE5. In the developing embryo, expressed mainly in the ventral optic stalk, optic chiasma, the neural retina and the primordial tissues that give rise to the pituitary/hypothalamus axis. Not expressed in the lens placode.

Its subcellular location is the nucleus. Its function is as follows. May be involved in eye development. The chain is Homeobox protein SIX6 (Six6) from Mus musculus (Mouse).